Reading from the N-terminus, the 359-residue chain is Type-1 angiotensin II receptor (359 aa).

At 1 to 25 (MILNSSTEDGIKRIQDDCPKAGRHS) the chain is on the extracellular side. Residue Asn-4 is glycosylated (N-linked (GlcNAc...) asparagine). 2 residues coordinate angiotensin II: Gln-15 and Asp-17. Disulfide bonds link Cys-18/Cys-274 and Cys-101/Cys-180. A helical membrane pass occupies residues 26-55 (YIFVMIPTLYSIIFVVGIFGNSLVVIVIYF). Topologically, residues 56 to 61 (YMKLKT) are cytoplasmic. Residues 62–89 (VASVFLLNLALADICFLLTLPLWAVYTA) form a helical membrane-spanning segment. The Extracellular segment spans residues 90–98 (MEYRWPFGN). The chain crosses the membrane as a helical span at residues 99–125 (YLCKIASASVSFNLYASVFLLTCLSID). At 126–141 (RYLAIVHPMKSRLRRT) the chain is on the cytoplasmic side. The helical transmembrane segment at 142–165 (MLVAKVTCVIIWLMAGLASLPAVI) threads the bilayer. The Extracellular segment spans residues 166–190 (HRNVFFIENTNITVCAFHYESQNST). An angiotensin II-binding site is contributed by Arg-167. An N-linked (GlcNAc...) asparagine glycan is attached at Asn-176. Angiotensin II is bound by residues Phe-182, His-183, and Tyr-184. Asn-188 carries N-linked (GlcNAc...) asparagine glycosylation. The chain crosses the membrane as a helical span at residues 191–216 (LPIGLGLTKNILGFMFPFLIILTSYT). Angiotensin II is bound at residue Lys-199. Topologically, residues 217-239 (LIWKALKKAYEIQKNKPRNDDIF) are cytoplasmic. Residues 240 to 268 (KIIMAIVLFFFFSWVPHQIFTFLDVLIQL) form a helical membrane-spanning segment. The Extracellular portion of the chain corresponds to 269–278 (GIIHDCKISD). The chain crosses the membrane as a helical span at residues 279-304 (IVDTAMPITICIAYFNNCLNPLFYGF). The Cytoplasmic segment spans residues 305-359 (LGKKFKKYFLQLLKYIPPKAKSHSTLSTKMSTLSYRPSDNVSSSAKKPVQCFEVE). Positions 337-349 (LSYRPSDNVSSSA) are enriched in polar residues. Residues 337 to 359 (LSYRPSDNVSSSAKKPVQCFEVE) are disordered. Cys-355 carries S-palmitoyl cysteine lipidation.

This sequence belongs to the G-protein coupled receptor 1 family. Interacts with MAS1. Interacts with ARRB1. Interacts with FLNA (via filamin repeat 21); increases PKA-mediated phosphorylation of FLNA. C-terminal Ser or Thr residues may be phosphorylated. As to expression, expressed in liver, kidney, adrenal gland, heart and colon.

The protein localises to the cell membrane. Its function is as follows. Receptor for angiotensin II, a vasoconstricting peptide, which acts as a key regulator of blood pressure and sodium retention by the kidney. The activated receptor in turn couples to G-alpha proteins G(q) (GNAQ, GNA11, GNA14 or GNA15) and thus activates phospholipase C and increases the cytosolic Ca(2+) concentrations, which in turn triggers cellular responses such as stimulation of protein kinase C. The sequence is that of Type-1 angiotensin II receptor (AGTR1) from Cavia porcellus (Guinea pig).